The chain runs to 703 residues: Prolyl 3-hydroxylase 2 (703 aa).

Positions 1-21 (MRESTWVSLLLLLLLPTPQRG) are cleaved as a signal peptide. The interval 17–40 (TPQRGGPQDGRRSPEPEPERGPLQ) is disordered. The segment covering 25 to 36 (DGRRSPEPEPER) has biased composition (basic and acidic residues). TPR repeat units follow at residues 42–75 (FDLL…HRRL), 144–177 (RVPY…NPEH), 205–238 (HLES…YFNE), and 301–334 (PLHY…HPDN). N444 and N544 each carry an N-linked (GlcNAc...) asparagine glycan. One can recognise a Fe2OG dioxygenase domain in the interval 552–666 (THMVCRTALS…RCAVALWFTL (115 aa)). Positions 575, 577, and 647 each coordinate Fe cation. R657 is a catalytic residue. The short motif at 700–703 (KDEL) is the Prevents secretion from ER element.

Belongs to the leprecan family. Requires Fe cation as cofactor. It depends on L-ascorbate as a cofactor. Detected in kidney. Detected on kidney tubular cells, pancreas acinar cells, Schwann cells of the peripheral nerve in the pinna, and in tunica adventitia, the smooth muscle layer of the aortic wall (at protein level). Detected in lung, skeletal muscle and kidney. Detected in kidney glomeruli and in prehypertrophic regions of long bone from neonates. In the eye, detected in the epithelial layer of the cornea and at lower levels in the sclera at the posterior end of the eye.

It is found in the endoplasmic reticulum. Its subcellular location is the sarcoplasmic reticulum. The protein localises to the golgi apparatus. The enzyme catalyses L-prolyl-[collagen] + 2-oxoglutarate + O2 = trans-3-hydroxy-L-prolyl-[collagen] + succinate + CO2. In terms of biological role, prolyl 3-hydroxylase that catalyzes the post-translational formation of 3-hydroxyproline on collagens. Contributes to proline 3-hydroxylation of collagen COL4A1 and COL1A1 in tendons, the eye sclera and in the eye lens capsule. Has high activity with the type IV collagen COL4A1, and lower activity with COL1A1. Catalyzes hydroxylation of the first Pro in Gly-Pro-Hyp sequences where Hyp is 4-hydroxyproline. Has no activity on substrates that have proline instead of 4-hydroxyproline in the third position. The sequence is that of Prolyl 3-hydroxylase 2 from Mus musculus (Mouse).